The primary structure comprises 449 residues: Phosphoglucosamine mutase (449 aa).

Catalysis depends on serine 104, which acts as the Phosphoserine intermediate. Mg(2+)-binding residues include serine 104, aspartate 243, aspartate 245, and aspartate 247. Serine 104 bears the Phosphoserine mark.

Belongs to the phosphohexose mutase family. Requires Mg(2+) as cofactor. In terms of processing, activated by phosphorylation.

It carries out the reaction alpha-D-glucosamine 1-phosphate = D-glucosamine 6-phosphate. Catalyzes the conversion of glucosamine-6-phosphate to glucosamine-1-phosphate. This is Phosphoglucosamine mutase from Xanthomonas oryzae pv. oryzae (strain PXO99A).